Reading from the N-terminus, the 378-residue chain is Acetylornithine deacetylase (378 aa).

His76 is a Zn(2+) binding site. Residue Asp78 is part of the active site. Asp108 contacts Zn(2+). Glu140 is an active-site residue. Glu141, Glu165, and His351 together coordinate Zn(2+).

Belongs to the peptidase M20A family. ArgE subfamily. Homodimer. It depends on Zn(2+) as a cofactor. The cofactor is Co(2+). Glutathione is required as a cofactor.

It localises to the cytoplasm. It carries out the reaction N(2)-acetyl-L-ornithine + H2O = L-ornithine + acetate. It participates in amino-acid biosynthesis; L-arginine biosynthesis; L-ornithine from N(2)-acetyl-L-ornithine (linear): step 1/1. Catalyzes the hydrolysis of the amide bond of N(2)-acetylated L-amino acids. Cleaves the acetyl group from N-acetyl-L-ornithine to form L-ornithine, an intermediate in L-arginine biosynthesis pathway, and a branchpoint in the synthesis of polyamines. In Vibrio cholerae serotype O1 (strain ATCC 39541 / Classical Ogawa 395 / O395), this protein is Acetylornithine deacetylase.